The sequence spans 636 residues: Phosphomethylpyrimidine synthase (636 aa).

The tract at residues 48-70 (DDTPTDFGGEKNPPVRVYDTSGP) is disordered. Substrate-binding positions include N231, M260, Y289, H325, 345–347 (SRG), 386–389 (DGLR), and E425. H429 contacts Zn(2+). Y452 serves as a coordination point for substrate. Position 493 (H493) interacts with Zn(2+). Residues C573, C576, and C581 each coordinate [4Fe-4S] cluster.

Belongs to the ThiC family. As to quaternary structure, homodimer. [4Fe-4S] cluster serves as cofactor.

The catalysed reaction is 5-amino-1-(5-phospho-beta-D-ribosyl)imidazole + S-adenosyl-L-methionine = 4-amino-2-methyl-5-(phosphooxymethyl)pyrimidine + CO + 5'-deoxyadenosine + formate + L-methionine + 3 H(+). Its pathway is cofactor biosynthesis; thiamine diphosphate biosynthesis. In terms of biological role, catalyzes the synthesis of the hydroxymethylpyrimidine phosphate (HMP-P) moiety of thiamine from aminoimidazole ribotide (AIR) in a radical S-adenosyl-L-methionine (SAM)-dependent reaction. This is Phosphomethylpyrimidine synthase from Cellvibrio japonicus (strain Ueda107) (Pseudomonas fluorescens subsp. cellulosa).